Reading from the N-terminus, the 475-residue chain is UDP-N-acetylmuramate--L-alanine ligase (475 aa).

An ATP-binding site is contributed by 118–124; sequence GTHGKTT.

Belongs to the MurCDEF family.

It localises to the cytoplasm. It catalyses the reaction UDP-N-acetyl-alpha-D-muramate + L-alanine + ATP = UDP-N-acetyl-alpha-D-muramoyl-L-alanine + ADP + phosphate + H(+). Its pathway is cell wall biogenesis; peptidoglycan biosynthesis. Its function is as follows. Cell wall formation. In Thermosynechococcus vestitus (strain NIES-2133 / IAM M-273 / BP-1), this protein is UDP-N-acetylmuramate--L-alanine ligase.